We begin with the raw amino-acid sequence, 122 residues long: Ribosome-binding factor A (122 aa).

Belongs to the RbfA family. In terms of assembly, monomer. Binds 30S ribosomal subunits, but not 50S ribosomal subunits or 70S ribosomes.

Its subcellular location is the cytoplasm. One of several proteins that assist in the late maturation steps of the functional core of the 30S ribosomal subunit. Associates with free 30S ribosomal subunits (but not with 30S subunits that are part of 70S ribosomes or polysomes). Required for efficient processing of 16S rRNA. May interact with the 5'-terminal helix region of 16S rRNA. The sequence is that of Ribosome-binding factor A from Prosthecochloris aestuarii (strain DSM 271 / SK 413).